Here is a 194-residue protein sequence, read N- to C-terminus: Probable thymidylate kinase (194 aa).

8-15 contributes to the ATP binding site; sequence GIDGSGKT.

It belongs to the thymidylate kinase family.

The enzyme catalyses dTMP + ATP = dTDP + ADP. In Sulfolobus acidocaldarius (strain ATCC 33909 / DSM 639 / JCM 8929 / NBRC 15157 / NCIMB 11770), this protein is Probable thymidylate kinase.